Consider the following 428-residue polypeptide: Arginine biosynthesis bifunctional protein ArgJ, mitochondrial (428 aa).

Substrate contacts are provided by T171, K197, T208, E294, N423, and S428. T208 serves as the catalytic Nucleophile.

It belongs to the ArgJ family. As to quaternary structure, heterodimer of an alpha and a beta chain. Post-translationally, the alpha and beta chains are autoproteolytically processed from a single precursor protein within the mitochondrion.

The protein resides in the mitochondrion matrix. It catalyses the reaction N(2)-acetyl-L-ornithine + L-glutamate = N-acetyl-L-glutamate + L-ornithine. The enzyme catalyses L-glutamate + acetyl-CoA = N-acetyl-L-glutamate + CoA + H(+). The protein operates within amino-acid biosynthesis; L-arginine biosynthesis; L-ornithine and N-acetyl-L-glutamate from L-glutamate and N(2)-acetyl-L-ornithine (cyclic): step 1/1. It participates in amino-acid biosynthesis; L-arginine biosynthesis; N(2)-acetyl-L-ornithine from L-glutamate: step 1/4. Functionally, catalyzes two activities which are involved in the cyclic version of arginine biosynthesis: the synthesis of acetylglutamate from glutamate and acetyl-CoA, and of ornithine by transacetylation between acetylornithine and glutamate. In Komagataella phaffii (strain GS115 / ATCC 20864) (Yeast), this protein is Arginine biosynthesis bifunctional protein ArgJ, mitochondrial.